A 794-amino-acid polypeptide reads, in one-letter code: Protocadherin beta-6 (794 aa).

An N-terminal signal peptide occupies residues 1-27 (MMQTKVQNKKRQVAFFILLMLWGEVGS). Over 28-688 (ESIQYSVLEE…AQADLLTVYL (661 aa)) the chain is Extracellular. Cadherin domains follow at residues 34–132 (VLEE…APEF), 137–241 (MLLK…VPEF), 246–345 (YEAQ…APEL), 350–449 (FISP…APAF), and 454–559 (YTLF…SPFV). N-linked (GlcNAc...) asparagine glycosylation is present at Asn46. Residues Cys95 and Cys101 are joined by a disulfide bond. N-linked (GlcNAc...) asparagine glycosylation is present at Asn183. Asn416 carries an N-linked (GlcNAc...) asparagine glycan. Asn565 carries an N-linked (GlcNAc...) asparagine glycan. The Cadherin 6 domain occupies 566–669 (GSAPCTELVP…LVDGFSQPYL (104 aa)). Residues 689–709 (VVALASVSSLFLFSVLLFVAV) form a helical membrane-spanning segment. The Cytoplasmic portion of the chain corresponds to 710–794 (RLCRRSRAAS…PTSRNSFPFS (85 aa)). The segment at 773–794 (PPQGTEREMEETPTSRNSFPFS) is disordered. The span at 784 to 794 (TPTSRNSFPFS) shows a compositional bias: polar residues.

Forms homodimers in trans (molecules expressed by two different cells). Forms promiscuous heterodimers in cis (at the plasma membrane of the same cell) with other protocadherins.

Its subcellular location is the cell membrane. Calcium-dependent cell-adhesion protein involved in cells self-recognition and non-self discrimination. Thereby, it is involved in the establishment and maintenance of specific neuronal connections in the brain. This is Protocadherin beta-6 from Pan troglodytes (Chimpanzee).